A 291-amino-acid chain; its full sequence is Nucleotide-binding protein LJ_0866 (291 aa).

13–20 (GMSGAGKT) contacts ATP. 63-66 (DLRV) serves as a coordination point for GTP.

Belongs to the RapZ-like family.

In terms of biological role, displays ATPase and GTPase activities. In Lactobacillus johnsonii (strain CNCM I-12250 / La1 / NCC 533), this protein is Nucleotide-binding protein LJ_0866.